A 305-amino-acid polypeptide reads, in one-letter code: Methionyl-tRNA formyltransferase (305 aa).

(6S)-5,6,7,8-tetrahydrofolate is bound at residue 111-114; that stretch reads SLLP.

Belongs to the Fmt family.

It carries out the reaction L-methionyl-tRNA(fMet) + (6R)-10-formyltetrahydrofolate = N-formyl-L-methionyl-tRNA(fMet) + (6S)-5,6,7,8-tetrahydrofolate + H(+). Its function is as follows. Attaches a formyl group to the free amino group of methionyl-tRNA(fMet). The formyl group appears to play a dual role in the initiator identity of N-formylmethionyl-tRNA by promoting its recognition by IF2 and preventing the misappropriation of this tRNA by the elongation apparatus. The sequence is that of Methionyl-tRNA formyltransferase from Helicobacter pylori (strain P12).